The primary structure comprises 553 residues: Keratin, type II cytoskeletal 73 (553 aa).

The interval 1–130 is head; it reads MNRQFTCKSG…DPEIQKVRAQ (130 aa). Residues 131 to 166 are coil 1A; the sequence is EREQIKALNNKFASFIDKVRFLEQQNQVLQTKWELL. In terms of domain architecture, IF rod spans 131 to 444; it reads EREQIKALNN…KLLEGEECRM (314 aa). Positions 167 to 185 are linker 1; sequence QQLDLSNCRRNLEPVYEAH. A coil 1B region spans residues 186–277; sequence ISSLQKQLDS…CLYEGEITQM (92 aa). Residues 278-301 are linker 12; the sequence is QSHISDTSVVLSMDNNRNLDLDSI. The coil 2 stretch occupies residues 302–440; it reads IAEVRAQYED…ATYRKLLEGE (139 aa). Residues 441–539 form a tail region; the sequence is ECRMSGEHTN…LGSPSKKTMR (99 aa).

Belongs to the intermediate filament family. As to quaternary structure, heterotetramer of two type I and two type II keratins.

Its function is as follows. Has a role in hair formation. Specific component of keratin intermediate filaments in the inner root sheath (IRS) of the hair follicle. This is Keratin, type II cytoskeletal 73 (Krt73) from Rattus norvegicus (Rat).